Here is a 586-residue protein sequence, read N- to C-terminus: Kelch-like protein 7 (586 aa).

Positions 44 to 111 constitute a BTB domain; sequence CDVILTVQER…AYTARISVNS (68 aa). The 103-residue stretch at 146–248 folds into the BACK domain; that stretch reads CLGISVLAEC…SKNFLSKTVQ (103 aa). Kelch repeat units lie at residues 294–336, 337–382, 383–430, 431–481, 483–528, and 530–575; these read RIAL…FWDN, VVYI…AAEG, KIYT…EANG, LIYV…FVKD, IFAV…AVGS, and IYVL…CVVD.

As to quaternary structure, homodimer. Component of the BCR(KLHL7) E3 ubiquitin ligase complex, at least composed of CUL3 and KLHL7 and RBX1.

It is found in the nucleus. The protein localises to the cytoplasm. Its pathway is protein modification; protein ubiquitination. Substrate-specific adapter of a BCR (BTB-CUL3-RBX1) E3 ubiquitin ligase complex. The BCR(KLHL7) complex acts by mediating ubiquitination and subsequent degradation of substrate proteins. Probably mediates 'Lys-48'-linked ubiquitination. The polypeptide is Kelch-like protein 7 (Klhl7) (Mus musculus (Mouse)).